The sequence spans 572 residues: Phosphoglucomutase-1 (572 aa).

Substrate-binding positions include T23, R27, 120–121 (SH), and K133. The Phosphoserine intermediate role is filled by S120. S120 contacts Mg(2+). Mg(2+) is bound by residues D288, D290, and D292. Substrate is bound by residues 292 to 293 (DR), T356, 375 to 377 (EES), K388, and R524.

This sequence belongs to the phosphohexose mutase family. It depends on Mg(2+) as a cofactor.

It localises to the cytoplasm. It carries out the reaction alpha-D-glucose 1-phosphate = alpha-D-glucose 6-phosphate. Functionally, this enzyme participates in both the breakdown and synthesis of glucose. This Dictyostelium discoideum (Social amoeba) protein is Phosphoglucomutase-1 (pgmA).